Reading from the N-terminus, the 329-residue chain is Probable cell division protein WhiA (329 aa).

The segment at residues Ser276–Arg309 is a DNA-binding region (H-T-H motif). The segment at Ala308–Gly329 is disordered. Over residues Arg309–Glu318 the composition is skewed to polar residues.

Belongs to the WhiA family.

Its function is as follows. Involved in cell division and chromosome segregation. The protein is Probable cell division protein WhiA of Cutibacterium acnes (strain DSM 16379 / KPA171202) (Propionibacterium acnes).